The primary structure comprises 255 residues: Type III pantothenate kinase (255 aa).

Residue 6 to 13 (DVGNTNTV) coordinates ATP. Substrate-binding positions include Tyr100 and 107–110 (GADR). The active-site Proton acceptor is Asp109. Asp129 contributes to the K(+) binding site. Thr132 contributes to the ATP binding site. Thr184 provides a ligand contact to substrate.

This sequence belongs to the type III pantothenate kinase family. In terms of assembly, homodimer. The cofactor is NH4(+). It depends on K(+) as a cofactor.

Its subcellular location is the cytoplasm. It catalyses the reaction (R)-pantothenate + ATP = (R)-4'-phosphopantothenate + ADP + H(+). Its pathway is cofactor biosynthesis; coenzyme A biosynthesis; CoA from (R)-pantothenate: step 1/5. Its function is as follows. Catalyzes the phosphorylation of pantothenate (Pan), the first step in CoA biosynthesis. The sequence is that of Type III pantothenate kinase from Acetivibrio thermocellus (strain ATCC 27405 / DSM 1237 / JCM 9322 / NBRC 103400 / NCIMB 10682 / NRRL B-4536 / VPI 7372) (Clostridium thermocellum).